We begin with the raw amino-acid sequence, 106 residues long: MTQPDMSQILAQAQQMQAKLQEAQREILATTVTGTAGNGLVSIDMQGNGMVSSVTIDPKVVDADDVETLQDLLVGAFAEAHEKLGTLAEQKMGPLSQGFDGLGGMF.

The protein belongs to the YbaB/EbfC family. In terms of assembly, homodimer.

The protein localises to the cytoplasm. The protein resides in the nucleoid. Its function is as follows. Binds to DNA and alters its conformation. May be involved in regulation of gene expression, nucleoid organization and DNA protection. The polypeptide is Nucleoid-associated protein DIP0260 (Corynebacterium diphtheriae (strain ATCC 700971 / NCTC 13129 / Biotype gravis)).